Consider the following 286-residue polypeptide: Phycobilisome 32.1 kDa linker polypeptide, phycocyanin-associated, rod (286 aa).

The region spanning 2 to 180 is the PBS-linker domain; the sequence is AITTAASRLG…LYRGYANSDR (179 aa). The CpcD-like domain occupies 234–286; it reads DRVYRLEVTGIRSPGYPSVRRSSTVFIVPYERLSDKIQQVHKQGGKIVSVTSA.

This sequence belongs to the phycobilisome linker protein family. As to quaternary structure, associated with the phycobilisome, a hemidiscoidal structure that is composed of two distinct substructures: a core complex and a number of rods radiating from the core.

The protein localises to the cellular thylakoid membrane. Rod linker protein, associated with phycocyanin. Linker polypeptides determine the state of aggregation and the location of the disk-shaped phycobiliprotein units within the phycobilisome and modulate their spectroscopic properties in order to mediate a directed and optimal energy transfer. The protein is Phycobilisome 32.1 kDa linker polypeptide, phycocyanin-associated, rod (cpcC) of Nostoc sp. (strain PCC 7120 / SAG 25.82 / UTEX 2576).